Here is a 139-residue protein sequence, read N- to C-terminus: MWLAHSHYTLACESIRSPLCKLPARLGGRTMISEFWEFVRSNFGVISTLIAIFIGAFWLKLDSKYAKKHDLSQLADIARSHDNRLATLESKVENLPTAVDVERLKTLLTDVKGDTKATSRQVDAMSHQVGLLLEAKLKE.

The chain crosses the membrane as a helical span at residues 43-59 (FGVISTLIAIFIGAFWL).

It localises to the membrane. This is an uncharacterized protein from Haemophilus influenzae (strain ATCC 51907 / DSM 11121 / KW20 / Rd).